Reading from the N-terminus, the 475-residue chain is MEILFVASEVAPWSKTGGLGDVAGALPRALAARGHAVSVVTPRYGTIDPHAHRLRPLHRALDVRGEPTTLWVSRDRAPVYFVEHEHFFGSRRGLYGEAHDYGDNAERFAYLARAALALPGALGLRPHIVHLNDWQTGLVPFLLRREHARDAALAGARTVFTIHNLAYQGVFSKHVVPALGLPWDVFRYEAMEFHDQLNFLKAGLVFADALTTVSPTYAREIATPQGGVGLDALLRHRARDLHGILNGIDVEEWDPATDRHLPARYSAADLSGKAACKSALQRELGLPERPDVPLVAMIGRLAEQKGLDLVVAALGELLARDLQLVLLGTGRPELEEAFRRAARERPDRMAARIGFDEGLAHRMEAGADLFLMPSRFEPCGLNQMYSLRYGTIPVVRAVGGLEDTVEDFDGWSRGTGFKFRDYHPQAMLLAVRRALEAHRDRRAWRAMMLRGMALDFSWDRSAQAYEALYRSLAAP.

An ADP-alpha-D-glucose-binding site is contributed by Lys-15.

Belongs to the glycosyltransferase 1 family. Bacterial/plant glycogen synthase subfamily.

The enzyme catalyses [(1-&gt;4)-alpha-D-glucosyl](n) + ADP-alpha-D-glucose = [(1-&gt;4)-alpha-D-glucosyl](n+1) + ADP + H(+). It participates in glycan biosynthesis; glycogen biosynthesis. Synthesizes alpha-1,4-glucan chains using ADP-glucose. The polypeptide is Glycogen synthase (Anaeromyxobacter sp. (strain Fw109-5)).